We begin with the raw amino-acid sequence, 281 residues long: Lectin alpha chain (281 aa).

N-linked (GlcNAc...) asparagine glycosylation is found at asparagine 35, asparagine 82, and asparagine 140.

The protein belongs to the leguminous lectin family. In terms of assembly, tetramer of 2 alpha and 2 beta chains. Glycosylated. In terms of processing, the beta chain is produced by partial proteolytic processing of the alpha chain.

D-galactose-binding lectin. The sequence is that of Lectin alpha chain from Lablab purpureus (Hyacinth bean).